Here is a 119-residue protein sequence, read N- to C-terminus: Large ribosomal subunit protein bL19 (119 aa).

It belongs to the bacterial ribosomal protein bL19 family.

In terms of biological role, this protein is located at the 30S-50S ribosomal subunit interface and may play a role in the structure and function of the aminoacyl-tRNA binding site. In Limosilactobacillus fermentum (strain NBRC 3956 / LMG 18251) (Lactobacillus fermentum), this protein is Large ribosomal subunit protein bL19.